Reading from the N-terminus, the 767-residue chain is Pyrin (767 aa).

A Pyrin domain is found at 1–92 (MAKTLGDHLL…AEELRKATGT (92 aa)). The segment at 94–219 (HLIEENRVGG…LQGLYNNAPG (126 aa)) is disordered. Polar residues-rich tracts occupy residues 126–142 (GTQQNNDESDTLPSSQA), 165–176 (LDSQTKPWTRST), and 183–208 (TQGTQSPGDKESTASAQLRRNVSSAG). Ser-241 is subject to Phosphoserine. A disordered region spans residues 311 to 346 (TSLIGEERCPTSWTENGNGSPETTESSGETAGSILS). Positions 321–340 (TSWTENGNGSPETTESSGET) are enriched in polar residues. The B box-type zinc-finger motif lies at 439–481 (QSLPQCPRHMKQVLLLFCEDHREPICLICRLSLEHQGHRVRPI). Zn(2+) is bound by residues Cys-444, His-447, Cys-467, and His-473. The stretch at 481–510 (IEEAALEYKEQIREQLERLREMRGYVEEHR) forms a coiled coil. Positions 489-647 (KEQIREQLER…CFSEMLSSEM (159 aa)) are required for homotrimerization and induction of pyroptosomes. Positions 697–719 (GGSEPKDYLHPQPAQDTPELHEI) are disordered.

In terms of assembly, homotrimer. Interacts (via the B box-type zinc finger) with PSTPIP1. Interacts (via the B30.2/SPRY domain) with several components of the inflammasome complex, including CASP1 p20 and p10 subunits, CASP5, PYCARD, NLRP1, NLRP2 and NLRP3, as well as with unprocessed IL1B; this interaction may lead to autophagic degradation of these proteins. Component of the AIM2 PANoptosome complex, a multiprotein complex that drives inflammatory cell death (PANoptosis). Interacts with NFKBIA and RELA. Interacts weakly with VASP and ACTR3. Interacts with active ULK1 (phosphorylated on 'Ser-317') and BECN1 simultaneously. Also interacts with ATG16L1 (via WD repeats), and with ATG8 family members, including GABARAP, GABARAPL1 and, to a lesser extent, GABARAPL2, MAP1LC3A/LC3A and MAP1LC3C/LC3C. Interacts with TRIM21. Interacts with YWHAB, YWHAE, YWHAG, YWHAH, YWHAQ and YWHAZ; the interaction is required for the down-regulation of pyrin pro-inflammatory activity. Phosphorylation at Ser-241 is required for the interaction with 14-3-3 proteins and down-regulation of pyrin pro-inflammatory activity. Post-translationally, degraded along with the delivery of its substrates to autolysosomal compartments (at protein level). In terms of tissue distribution, expressed in spleen peripheral blood granulocytes. Not expressed in lymphocytes, thymus, testis, ovary, heart, brain, lung, liver, kidney and muscle.

It is found in the cytoplasm. Its subcellular location is the cytoskeleton. The protein localises to the cell projection. It localises to the ruffle. The protein resides in the lamellipodium. It is found in the cytoplasmic vesicle. Its subcellular location is the autophagosome. The protein localises to the nucleus. Involved in the regulation of innate immunity and the inflammatory response in response to IFNG/IFN-gamma. Organizes autophagic machinery by serving as a platform for the assembly of ULK1, Beclin 1/BECN1, ATG16L1, and ATG8 family members and recognizes specific autophagy targets, thus coordinating target recognition with assembly of the autophagic apparatus and initiation of autophagy. Acts as an autophagy receptor for the degradation of several inflammasome components, including CASP1, NLRP1 and NLRP3, hence preventing excessive IL1B- and IL18-mediated inflammation. However, it can also have a positive effect in the inflammatory pathway, acting as an innate immune sensor that triggers PYCARD/ASC specks formation, caspase-1 activation, and IL1B and IL18 production. Together with AIM2, also acts as a mediator of pyroptosis, necroptosis and apoptosis (PANoptosis), an integral part of host defense against pathogens, in response to bacterial infection. It is required for PSTPIP1-induced PYCARD/ASC oligomerization and inflammasome formation. Recruits PSTPIP1 to inflammasomes, and is required for PSTPIP1 oligomerization. This Mus musculus (Mouse) protein is Pyrin.